The primary structure comprises 122 residues: MVDWKPFGTYLLRKKLQYLNISTVLCILIKNHLVLEYVVIKLSETNLIECINKIKSVLNGQTTREEVSDWAGTYVYADDPEVEDDRVWDMLILLSGIDLKDSSETYLHSTDDLNDWIKQYTE.

This is an uncharacterized protein from Bacillus subtilis (strain 168).